We begin with the raw amino-acid sequence, 114 residues long: MSEVIEGNVKIDRLSPGDGKTFPKTGDLVTIHYTGTLENEQKFDSSVDRGSPFQCNIGVGQVIKGWDVAIPKLSVGEKARLTIPGAYAYGPRGFPGLIPPNATLIFEVELLKVN.

A PPIase FKBP-type domain is found at Gly26–Asn114.

This sequence belongs to the FKBP-type PPIase family. FKBP1 subfamily.

Its subcellular location is the cytoplasm. The catalysed reaction is [protein]-peptidylproline (omega=180) = [protein]-peptidylproline (omega=0). With respect to regulation, inhibited by both FK506 and rapamycin. In terms of biological role, PPIases accelerate the folding of proteins. It catalyzes the cis-trans isomerization of proline imidic peptide bonds in oligopeptides. This Eremothecium gossypii (strain ATCC 10895 / CBS 109.51 / FGSC 9923 / NRRL Y-1056) (Yeast) protein is FK506-binding protein 1 (FPR1).